Here is a 637-residue protein sequence, read N- to C-terminus: Biosynthetic arginine decarboxylase (637 aa).

The residue at position 101 (K101) is an N6-(pyridoxal phosphate)lysine. F286–Y296 is a substrate binding site.

It belongs to the Orn/Lys/Arg decarboxylase class-II family. SpeA subfamily. It depends on Mg(2+) as a cofactor. Pyridoxal 5'-phosphate serves as cofactor.

The catalysed reaction is L-arginine + H(+) = agmatine + CO2. It participates in amine and polyamine biosynthesis; agmatine biosynthesis; agmatine from L-arginine: step 1/1. Functionally, catalyzes the biosynthesis of agmatine from arginine. This chain is Biosynthetic arginine decarboxylase, found in Shewanella sediminis (strain HAW-EB3).